A 668-amino-acid chain; its full sequence is Endoplasmic reticulum oxidoreductin-1 (668 aa).

The first 22 residues, 1 to 22 (MKPASRLFYLSLFALWSPEAQC), serve as a signal peptide directing secretion. Cystine bridges form between Cys-79-Cys-413, Cys-89-Cys-94, Cys-150-Cys-352, and Cys-416-Cys-419. Residues 116–142 (KLEGPRAKHPGKSVQKEEPKRPLQGKL) form a disordered region. Residues Arg-186, Thr-188, Trp-199, Ser-282, and His-285 each contribute to the FAD site. N-linked (GlcNAc...) asparagine glycans are attached at residues Asn-298 and Asn-307. Arg-314 contributes to the FAD binding site. Asn-406 is a glycosylation site (N-linked (GlcNAc...) asparagine). Cys-416 acts as the Nucleophile in catalysis. Cys-419 is a catalytic residue. Asn-443 is a glycosylation site (N-linked (GlcNAc...) asparagine). Disordered regions lie at residues 488–519 (VEES…DRAK) and 554–597 (GVTP…DPNF). Polar residues predominate over residues 494-509 (GQQPQSHEQIEGSENS). The span at 570-581 (DNNDDDDDDDEF) shows a compositional bias: acidic residues.

Belongs to the EROs family. May function both as a monomer and a homodimer. FAD serves as cofactor.

It localises to the endoplasmic reticulum membrane. In terms of biological role, essential oxidoreductase that oxidizes proteins in the endoplasmic reticulum to produce disulfide bonds. Acts by oxidizing directly pdi1 isomerase through a direct disulfide exchange. Does not act as a direct oxidant of folding substrate, but relies on pdi1 to transfer oxidizing equivalent. Does not oxidize all pdi related proteins, suggesting that it can discriminate between pdi1 and related proteins. Its reoxidation probably involves electron transfer to molecular oxygen via FAD. Acts independently of glutathione. May be responsible for a significant proportion of reactive oxygen species (ROS) in the cell, thereby being a source of oxidative stress. The chain is Endoplasmic reticulum oxidoreductin-1 (ero-1) from Neurospora crassa (strain ATCC 24698 / 74-OR23-1A / CBS 708.71 / DSM 1257 / FGSC 987).